Here is a 130-residue protein sequence, read N- to C-terminus: Small ribosomal subunit protein uS9 (130 aa).

Belongs to the universal ribosomal protein uS9 family.

The sequence is that of Small ribosomal subunit protein uS9 from Thiobacillus denitrificans (strain ATCC 25259 / T1).